A 648-amino-acid chain; its full sequence is Mitochondrial Rho GTPase 1 (648 aa).

Residues 1–619 lie on the Cytoplasmic side of the membrane; sequence MARYAAGAVD…KHYNRLINRS (619 aa). A Phosphoserine modification is found at Ser14. The Miro 1 domain occupies 15–182; that stretch reads PKSVRIVVVG…FYYAQKTVLH (168 aa). 2 consecutive EF-hand domains span residues 198-233 and 319-354; these read RCVRALKRIFILCDHDRDGALSEAELNDFQVKCFHA and AAIDFLKGMYMLFDDDQDNNLRPQEIEDLFSTAPES. Residues Asp211, Asp213, Asp215, Glu222, Asp332, Asp334, Asp336, Asn338, and Glu343 each coordinate Ca(2+). The Miro 2 domain maps to 427-595; the sequence is RKVFQCFVFG…FRKILTAAQH (169 aa). Residues 620–640 traverse the membrane as a helical segment; sequence LMAVSIGAAAVVVGLAAYRVY. At 641-648 the chain is on the mitochondrial intermembrane side; sequence ATRKSSSA.

This sequence belongs to the mitochondrial Rho GTPase family. Expressed in roots, leaves, stems, flowers and siliques.

It is found in the mitochondrion outer membrane. Its function is as follows. Mitochondrial GTPase required to maintain proper development, morphology and intracellular distribution of mitochondria, which in turn are essential for the progress of embryonic cell division, development of haploid male and female gametes, and pollen tube growth. The polypeptide is Mitochondrial Rho GTPase 1 (Arabidopsis thaliana (Mouse-ear cress)).